A 420-amino-acid polypeptide reads, in one-letter code: LanC-like protein 3 (420 aa).

Belongs to the LanC-like protein family.

The sequence is that of LanC-like protein 3 (Lancl3) from Mus musculus (Mouse).